A 444-amino-acid chain; its full sequence is C4-dicarboxylate transport protein 1 (444 aa).

The next 9 membrane-spanning stretches (helical) occupy residues 9–29 (SIFL…VGIP), 42–62 (FIKL…VNGI), 78–98 (SVIY…VVAY), 152–172 (ILQV…VGEQ), 190–210 (IMGM…AFTT), 221–241 (LGAL…AVLG), 307–327 (FSIY…TPLA), 354–374 (VILA…LVLV), and 380–400 (FMGI…TVTI).

The protein belongs to the dicarboxylate/amino acid:cation symporter (DAACS) (TC 2.A.23) family.

Its subcellular location is the cell inner membrane. Functionally, responsible for the transport of dicarboxylates such as succinate, fumarate, and malate from the periplasm across the membrane. This chain is C4-dicarboxylate transport protein 1, found in Pseudomonas paraeruginosa (strain DSM 24068 / PA7) (Pseudomonas aeruginosa (strain PA7)).